The following is an 804-amino-acid chain: Probable exo-1,4-beta-xylosidase xlnD (804 aa).

The signal sequence occupies residues 1-17 (MAVAALALLALLPQALG). Residues Asn-20, Asn-115, Asn-139, Asn-234, and Asn-243 are each glycosylated (N-linked (GlcNAc...) asparagine). Asp-307 is a catalytic residue. N-linked (GlcNAc...) asparagine glycans are attached at residues Asn-349, Asn-382, Asn-404, Asn-433, Asn-444, Asn-485, Asn-489, Asn-621, Asn-652, Asn-666, Asn-688, and Asn-710.

This sequence belongs to the glycosyl hydrolase 3 family.

The protein resides in the secreted. It carries out the reaction Hydrolysis of (1-&gt;4)-beta-D-xylans, to remove successive D-xylose residues from the non-reducing termini.. Its pathway is glycan degradation; xylan degradation. In terms of biological role, xylan 1,4-beta-xylosidase involved in the hydrolysis of xylan, a major structural heterogeneous polysaccharide found in plant biomass representing the second most abundant polysaccharide in the biosphere, after cellulose. This chain is Probable exo-1,4-beta-xylosidase xlnD (xlnD), found in Aspergillus japonicus.